The following is a 322-amino-acid chain: NADH-quinone oxidoreductase subunit H (322 aa).

The next 8 membrane-spanning stretches (helical) occupy residues 15–35 (ILHI…LSIL), 82–102 (IFIL…PTIP), 114–134 (IGIL…LFAG), 149–169 (ASAQ…GVIA), 186–206 (VWNV…GIAL), 243–263 (ISII…YFGF), 265–285 (GSSF…FILI), and 302–322 (WKIC…FILI).

It belongs to the complex I subunit 1 family. As to quaternary structure, NDH-1 is composed of 13 different subunits. Subunits NuoA, H, J, K, L, M, N constitute the membrane sector of the complex.

Its subcellular location is the cell membrane. It carries out the reaction a quinone + NADH + 5 H(+)(in) = a quinol + NAD(+) + 4 H(+)(out). Functionally, NDH-1 shuttles electrons from NADH, via FMN and iron-sulfur (Fe-S) centers, to quinones in the respiratory chain. The immediate electron acceptor for the enzyme in this species is believed to be ubiquinone. Couples the redox reaction to proton translocation (for every two electrons transferred, four hydrogen ions are translocated across the cytoplasmic membrane), and thus conserves the redox energy in a proton gradient. This subunit may bind ubiquinone. This chain is NADH-quinone oxidoreductase subunit H, found in Buchnera aphidicola subsp. Schizaphis graminum (strain Sg).